The sequence spans 652 residues: DNA mismatch repair protein MutL (652 aa).

Disordered regions lie at residues 357-377 and 425-457; these read LGAN…NYPS and PDKG…NSTD. Positions 365-375 are enriched in polar residues; that stretch reads SHSSNTPTLNY.

This sequence belongs to the DNA mismatch repair MutL/HexB family.

In terms of biological role, this protein is involved in the repair of mismatches in DNA. It is required for dam-dependent methyl-directed DNA mismatch repair. May act as a 'molecular matchmaker', a protein that promotes the formation of a stable complex between two or more DNA-binding proteins in an ATP-dependent manner without itself being part of a final effector complex. This chain is DNA mismatch repair protein MutL, found in Colwellia psychrerythraea (strain 34H / ATCC BAA-681) (Vibrio psychroerythus).